The sequence spans 77 residues: Adipokinetic prohormone type 3 (77 aa).

Residues 1–22 form the signal peptide; sequence MQVRAVLVLAVVALVAVATSRA. Residue glutamine 23 is modified to Pyrrolidone carboxylic acid. Tryptophan 30 carries the tryptophan amide modification.

It belongs to the AKH/HRTH/RPCH family.

The protein resides in the secreted. Functionally, this hormone, released from cells in the corpora cardiaca, causes release of diglycerides from the fat body and stimulation of muscles to use these diglycerides as an energy source during energy-demanding processes. The polypeptide is Adipokinetic prohormone type 3 (Locusta migratoria (Migratory locust)).